The primary structure comprises 831 residues: Prickle-like protein 1 (831 aa).

Residues 14–122 (FGCQRSSTSD…TIKLLSRAMM (109 aa)) enclose the PET domain. LIM zinc-binding domains lie at 124–189 (AVCE…LLKP), 189–249 (PRCS…LYAE), and 249–313 (EYCE…EDIH). The interval 314-346 (ASDSSDSAFQSARSRDSRRSVRMGRSSRSADQC) is disordered. Phosphoserine occurs at positions 315, 591, and 594. Disordered stretches follow at residues 664–688 (EERG…NALN) and 763–831 (CSSS…CIIS). Basic residues predominate over residues 669–680 (RPHHHRHRRSRK). Ser-683 is subject to Phosphoserine. A compositionally biased stretch (polar residues) spans 797–812 (DLSSPASALPTPQFNQ). Residues 815-831 (TKSKKKKGHRGKNCIIS) are compositionally biased toward basic residues. Cys-828 is subject to Cysteine methyl ester. Cys-828 carries S-farnesyl cysteine lipidation. Positions 829–831 (IIS) are cleaved as a propeptide — removed in mature form.

This sequence belongs to the prickle / espinas / testin family. Interacts with REST.

The protein resides in the nucleus membrane. The protein localises to the cytoplasm. It is found in the cytosol. Its function is as follows. Involved in the planar cell polarity pathway that controls convergent extension during gastrulation and neural tube closure. Convergent extension is a complex morphogenetic process during which cells elongate, move mediolaterally, and intercalate between neighboring cells, leading to convergence toward the mediolateral axis and extension along the anteroposterior axis. Necessary for nuclear localization of REST. May serve as nuclear receptor. In Rattus norvegicus (Rat), this protein is Prickle-like protein 1 (Prickle1).